The following is a 341-amino-acid chain: Biotin synthase (341 aa).

In terms of domain architecture, Radical SAM core spans 40 to 267 (AEIQVSTLLS…RSMVRLSAGR (228 aa)). 3 residues coordinate [4Fe-4S] cluster: Cys55, Cys59, and Cys62. [2Fe-2S] cluster contacts are provided by Cys99, Cys130, Cys190, and Arg262.

This sequence belongs to the radical SAM superfamily. Biotin synthase family. As to quaternary structure, homodimer. The cofactor is [4Fe-4S] cluster. [2Fe-2S] cluster serves as cofactor.

It carries out the reaction (4R,5S)-dethiobiotin + (sulfur carrier)-SH + 2 reduced [2Fe-2S]-[ferredoxin] + 2 S-adenosyl-L-methionine = (sulfur carrier)-H + biotin + 2 5'-deoxyadenosine + 2 L-methionine + 2 oxidized [2Fe-2S]-[ferredoxin]. It participates in cofactor biosynthesis; biotin biosynthesis; biotin from 7,8-diaminononanoate: step 2/2. Functionally, catalyzes the conversion of dethiobiotin (DTB) to biotin by the insertion of a sulfur atom into dethiobiotin via a radical-based mechanism. The chain is Biotin synthase from Xylella fastidiosa (strain M12).